We begin with the raw amino-acid sequence, 216 residues long: Maleylacetoacetate isomerase (216 aa).

At methionine 1 the chain carries N-acetylmethionine. The region spanning 4-87 is the GST N-terminal domain; the sequence is GKPVLYSYFR…YLEETRPIPR (84 aa). Glutathione is bound by residues 14 to 19 and glutamine 45; that span reads SSCSWR. An N6-succinyllysine modification is found at lysine 57. Residues valine 59, 71 to 72, glutamine 111, and 115 to 117 contribute to the glutathione site; these read QS and NLS. The GST C-terminal domain maps to 92 to 212; that stretch reads DPQKRAIVRM…HPCRQPDTPA (121 aa). Residue threonine 136 is modified to Phosphothreonine. The residue at position 137 (serine 137) is a Phosphoserine. An N6-succinyllysine modification is found at lysine 177. A Phosphoserine modification is found at serine 181.

It belongs to the GST superfamily. Zeta family. As to quaternary structure, homodimer. Requires glutathione as cofactor. Post-translationally, the N-terminus is blocked.

Its subcellular location is the cytoplasm. It carries out the reaction 4-maleylacetoacetate = 4-fumarylacetoacetate. The catalysed reaction is RX + glutathione = an S-substituted glutathione + a halide anion + H(+). Its pathway is amino-acid degradation; L-phenylalanine degradation; acetoacetate and fumarate from L-phenylalanine: step 5/6. In terms of biological role, probable bifunctional enzyme showing minimal glutathione-conjugating activity with ethacrynic acid and 7-chloro-4-nitrobenz-2-oxa-1, 3-diazole and maleylacetoacetate isomerase activity. Also has low glutathione peroxidase activity with t-butyl and cumene hydroperoxides. Is able to catalyze the glutathione dependent oxygenation of dichloroacetic acid to glyoxylic acid. This chain is Maleylacetoacetate isomerase (Gstz1), found in Rattus norvegicus (Rat).